Reading from the N-terminus, the 172-residue chain is Ribosome maturation factor RimP (172 aa).

Belongs to the RimP family.

It is found in the cytoplasm. Functionally, required for maturation of 30S ribosomal subunits. This chain is Ribosome maturation factor RimP, found in Chlorobium phaeovibrioides (strain DSM 265 / 1930) (Prosthecochloris vibrioformis (strain DSM 265)).